A 180-amino-acid polypeptide reads, in one-letter code: NADH-quinone oxidoreductase subunit I (180 aa).

2 4Fe-4S ferredoxin-type domains span residues 50-80 and 90-119; these read LTRDPDGEERCVACNLCAVACPVGCISLQKA and EFFRINFSRCIFCGLCEEACPTTAIQLTPD. The [4Fe-4S] cluster site is built by Cys60, Cys63, Cys66, Cys70, Cys99, Cys102, Cys105, and Cys109.

Belongs to the complex I 23 kDa subunit family. In terms of assembly, NDH-1 is composed of 13 different subunits. Subunits NuoA, H, J, K, L, M, N constitute the membrane sector of the complex. [4Fe-4S] cluster serves as cofactor.

It is found in the cell inner membrane. The catalysed reaction is a quinone + NADH + 5 H(+)(in) = a quinol + NAD(+) + 4 H(+)(out). Its function is as follows. NDH-1 shuttles electrons from NADH, via FMN and iron-sulfur (Fe-S) centers, to quinones in the respiratory chain. The immediate electron acceptor for the enzyme in this species is believed to be ubiquinone. Couples the redox reaction to proton translocation (for every two electrons transferred, four hydrogen ions are translocated across the cytoplasmic membrane), and thus conserves the redox energy in a proton gradient. The chain is NADH-quinone oxidoreductase subunit I from Yersinia pseudotuberculosis serotype O:1b (strain IP 31758).